Here is a 376-residue protein sequence, read N- to C-terminus: 2-aminoethylphosphonate--pyruvate transaminase 2 (376 aa).

An N6-(pyridoxal phosphate)lysine modification is found at K194.

The protein belongs to the class-V pyridoxal-phosphate-dependent aminotransferase family. PhnW subfamily. In terms of assembly, homodimer. It depends on pyridoxal 5'-phosphate as a cofactor.

The catalysed reaction is (2-aminoethyl)phosphonate + pyruvate = phosphonoacetaldehyde + L-alanine. In terms of biological role, involved in phosphonate degradation. In Burkholderia lata (strain ATCC 17760 / DSM 23089 / LMG 22485 / NCIMB 9086 / R18194 / 383), this protein is 2-aminoethylphosphonate--pyruvate transaminase 2.